Consider the following 280-residue polypeptide: UPF0276 protein NMA0228 (280 aa).

This sequence belongs to the UPF0276 family.

This is UPF0276 protein NMA0228 from Neisseria meningitidis serogroup A / serotype 4A (strain DSM 15465 / Z2491).